Here is a 379-residue protein sequence, read N- to C-terminus: ATP phosphoribosyltransferase regulatory subunit (379 aa).

Belongs to the class-II aminoacyl-tRNA synthetase family. HisZ subfamily. Heteromultimer composed of HisG and HisZ subunits.

Its subcellular location is the cytoplasm. The protein operates within amino-acid biosynthesis; L-histidine biosynthesis; L-histidine from 5-phospho-alpha-D-ribose 1-diphosphate: step 1/9. In terms of biological role, required for the first step of histidine biosynthesis. May allow the feedback regulation of ATP phosphoribosyltransferase activity by histidine. The protein is ATP phosphoribosyltransferase regulatory subunit of Caldanaerobacter subterraneus subsp. tengcongensis (strain DSM 15242 / JCM 11007 / NBRC 100824 / MB4) (Thermoanaerobacter tengcongensis).